The chain runs to 426 residues: Tol-Pal system protein TolB (426 aa).

The first 25 residues, 1–25 (MNAMSRISRRIFLALALSLAGLAQA), serve as a signal peptide directing secretion.

It belongs to the TolB family. In terms of assembly, the Tol-Pal system is composed of five core proteins: the inner membrane proteins TolA, TolQ and TolR, the periplasmic protein TolB and the outer membrane protein Pal. They form a network linking the inner and outer membranes and the peptidoglycan layer.

It is found in the periplasm. Its function is as follows. Part of the Tol-Pal system, which plays a role in outer membrane invagination during cell division and is important for maintaining outer membrane integrity. The sequence is that of Tol-Pal system protein TolB from Dechloromonas aromatica (strain RCB).